A 63-amino-acid polypeptide reads, in one-letter code: Large ribosomal subunit protein uL29 (63 aa).

The protein belongs to the universal ribosomal protein uL29 family.

The protein is Large ribosomal subunit protein uL29 of Pseudomonas fluorescens (strain ATCC BAA-477 / NRRL B-23932 / Pf-5).